A 259-amino-acid chain; its full sequence is Imidazole glycerol phosphate synthase subunit HisF (259 aa).

Active-site residues include Asp-11 and Asp-130.

This sequence belongs to the HisA/HisF family. As to quaternary structure, heterodimer of HisH and HisF.

It is found in the cytoplasm. The catalysed reaction is 5-[(5-phospho-1-deoxy-D-ribulos-1-ylimino)methylamino]-1-(5-phospho-beta-D-ribosyl)imidazole-4-carboxamide + L-glutamine = D-erythro-1-(imidazol-4-yl)glycerol 3-phosphate + 5-amino-1-(5-phospho-beta-D-ribosyl)imidazole-4-carboxamide + L-glutamate + H(+). It functions in the pathway amino-acid biosynthesis; L-histidine biosynthesis; L-histidine from 5-phospho-alpha-D-ribose 1-diphosphate: step 5/9. Functionally, IGPS catalyzes the conversion of PRFAR and glutamine to IGP, AICAR and glutamate. The HisF subunit catalyzes the cyclization activity that produces IGP and AICAR from PRFAR using the ammonia provided by the HisH subunit. The chain is Imidazole glycerol phosphate synthase subunit HisF from Desulfosudis oleivorans (strain DSM 6200 / JCM 39069 / Hxd3) (Desulfococcus oleovorans).